We begin with the raw amino-acid sequence, 440 residues long: Argininosuccinate lyase (440 aa).

The protein belongs to the lyase 1 family. Argininosuccinate lyase subfamily.

It is found in the cytoplasm. The catalysed reaction is 2-(N(omega)-L-arginino)succinate = fumarate + L-arginine. It functions in the pathway amino-acid biosynthesis; L-arginine biosynthesis; L-arginine from L-ornithine and carbamoyl phosphate: step 3/3. The chain is Argininosuccinate lyase from Clostridium botulinum (strain Loch Maree / Type A3).